The following is a 636-amino-acid chain: Endoglucanase 4 (636 aa).

The signal sequence occupies residues 1–25 (MTRRWSFLVQCFTFKKKEGVRSRYM). Asp-82 serves as the catalytic Nucleophile. Catalysis depends on residues His-400, Asp-438, and Glu-447. In terms of domain architecture, CBM3 spans 478-635 (KVEDEFFVEA…GDLVFGTLPN (158 aa)).

Belongs to the glycosyl hydrolase 9 (cellulase E) family.

The protein localises to the secreted. It carries out the reaction Endohydrolysis of (1-&gt;4)-beta-D-glucosidic linkages in cellulose, lichenin and cereal beta-D-glucans.. This is Endoglucanase 4 from Bacillus sp. (strain KSM-522).